The sequence spans 296 residues: tRNA dimethylallyltransferase (296 aa).

2 to 9 (GPTASGKT) lines the ATP pocket. Position 4–9 (4–9 (TASGKT)) interacts with substrate. Interaction with substrate tRNA stretches follow at residues 27-30 (DSAL), 151-155 (QRLSR), and 232-237 (RCVGYR).

Belongs to the IPP transferase family. As to quaternary structure, monomer. Requires Mg(2+) as cofactor.

It carries out the reaction adenosine(37) in tRNA + dimethylallyl diphosphate = N(6)-dimethylallyladenosine(37) in tRNA + diphosphate. In terms of biological role, catalyzes the transfer of a dimethylallyl group onto the adenine at position 37 in tRNAs that read codons beginning with uridine, leading to the formation of N6-(dimethylallyl)adenosine (i(6)A). In Shewanella frigidimarina (strain NCIMB 400), this protein is tRNA dimethylallyltransferase.